A 917-amino-acid polypeptide reads, in one-letter code: Hexokinase-2 (917 aa).

An N-acetylmethionine modification is found at Met1. The tract at residues 1–16 (MIASHLLAYFFTELNH) is mitochondrial-binding peptide (MBP). Hexokinase domains follow at residues 16-458 (HDQV…MVTA) and 464-906 (AYQH…LITA). ATP contacts are provided by residues Arg30 and 84 to 89 (DLGGTN). The tract at residues 73–207 (DGTEHGEFLA…DFDIDIVAMV (135 aa)) is hexokinase small subdomain 1. 84-88 (DLGGT) lines the D-glucose 6-phosphate pocket. D-glucose is bound by residues 155–156 (SF), 172–173 (TK), 208–209 (ND), Asn235, Glu260, and 291–294 (QLFE). A hexokinase large subdomain 1 region spans residues 208–447 (NDTVATMMTC…CDIRFLCSED (240 aa)). Asp209 provides a ligand contact to D-glucose 6-phosphate. 413–415 (DGS) is a D-glucose 6-phosphate binding site. Position 425–426 (425–426 (KR)) interacts with ATP. Residues Ser449 and 532–536 (DLGGT) contribute to the D-glucose 6-phosphate site. Positions 521 to 655 (DGTEKGDFLA…EFDLDVVAVV (135 aa)) are hexokinase small subdomain 2. 532–537 (DLGGTN) serves as a coordination point for ATP. D-glucose contacts are provided by residues 603-604 (SF), 620-621 (TK), and 656-657 (ND). The hexokinase large subdomain 2 stretch occupies residues 656-895 (NDTVGTMMTC…CDVSFLESED (240 aa)). 2 residues coordinate D-glucose 6-phosphate: Asp657 and Thr680. Thr680 contacts ATP. D-glucose is bound by residues 682-683 (SN), Glu708, and 739-742 (QRFE). ATP is bound by residues 747-748 (GM), 784-788 (TKFLS), and 863-867 (TLYKL). D-glucose 6-phosphate-binding positions include 861–863 (DGT) and Ser897.

It belongs to the hexokinase family. In terms of assembly, monomer. Interacts with TIGAR; the interaction increases hexokinase activity in a hypoxia- and HIF1A-dependent manner.

Its subcellular location is the mitochondrion outer membrane. It is found in the cytoplasm. It localises to the cytosol. It carries out the reaction a D-hexose + ATP = a D-hexose 6-phosphate + ADP + H(+). The catalysed reaction is D-fructose + ATP = D-fructose 6-phosphate + ADP + H(+). The enzyme catalyses D-glucose + ATP = D-glucose 6-phosphate + ADP + H(+). The protein operates within carbohydrate metabolism; hexose metabolism. Its pathway is carbohydrate degradation; glycolysis; D-glyceraldehyde 3-phosphate and glycerone phosphate from D-glucose: step 1/4. With respect to regulation, hexokinase activity is specifically inhibited by 2,6-disubstituted glucosamines. In terms of biological role, catalyzes the phosphorylation of hexose, such as D-glucose and D-fructose, to hexose 6-phosphate (D-glucose 6-phosphate and D-fructose 6-phosphate, respectively). Mediates the initial step of glycolysis by catalyzing phosphorylation of D-glucose to D-glucose 6-phosphate. Plays a key role in maintaining the integrity of the outer mitochondrial membrane by preventing the release of apoptogenic molecules from the intermembrane space and subsequent apoptosis. The sequence is that of Hexokinase-2 from Equus zebra (Mountain zebra).